The following is a 285-amino-acid chain: uncharacterized protein (285 aa).

Residues 6 to 26 (IKYFSTIIVAVVAVLAGWWLW) traverse the membrane as a helical segment.

Belongs to the membrane fusion protein (MFP) (TC 8.A.1) family.

The protein resides in the membrane. This is an uncharacterized protein from Escherichia coli (strain K12).